The following is a 41-amino-acid chain: MKILSSLKTAKHRHPDCRIVRRRGRLYVICKSDPRFKARQR.

This sequence belongs to the bacterial ribosomal protein bL36 family.

In Edwardsiella ictaluri (strain 93-146), this protein is Large ribosomal subunit protein bL36.